Here is a 221-residue protein sequence, read N- to C-terminus: tRNA (guanine-N(7)-)-methyltransferase (221 aa).

4 residues coordinate S-adenosyl-L-methionine: glutamate 51, glutamate 76, aspartate 103, and aspartate 125. Aspartate 125 is a catalytic residue. Residues lysine 129 and aspartate 161 each contribute to the substrate site.

This sequence belongs to the class I-like SAM-binding methyltransferase superfamily. TrmB family.

The enzyme catalyses guanosine(46) in tRNA + S-adenosyl-L-methionine = N(7)-methylguanosine(46) in tRNA + S-adenosyl-L-homocysteine. Its pathway is tRNA modification; N(7)-methylguanine-tRNA biosynthesis. Functionally, catalyzes the formation of N(7)-methylguanine at position 46 (m7G46) in tRNA. This chain is tRNA (guanine-N(7)-)-methyltransferase, found in Wolbachia pipientis wMel.